We begin with the raw amino-acid sequence, 213 residues long: Cell wall protein PGA62 (213 aa).

Positions 1-18 (MQFSSAVVLSAVAGSALA) are cleaved as a signal peptide. A glycan (N-linked (GlcNAc...) asparagine) is linked at Asn22. Residues 120–194 (CPLPSTEAPG…APAVSTAEAG (75 aa)) form a disordered region. Over residues 145–172 (PVPTTAAESSPAKTTAAESSPAQETTPK) the composition is skewed to polar residues. Residues 173 to 194 (TVAAESSSAETTAPAVSTAEAG) show a composition bias toward low complexity. Gly194 carries GPI-anchor amidated glycine lipidation. Positions 195–213 (AAANAVPVAAGLLALAALF) are cleaved as a propeptide — removed in mature form.

The protein belongs to the HWP1 family. In terms of processing, N- and O-glycosylated. The GPI-anchor is attached to the protein in the endoplasmic reticulum and serves to target the protein to the cell surface. There, the glucosamine-inositol phospholipid moiety is cleaved off and the GPI-modified mannoprotein is covalently attached via its lipidless GPI glycan remnant to the 1,6-beta-glucan of the outer cell wall layer.

The protein resides in the secreted. The protein localises to the cell wall. It is found in the membrane. Functionally, cell wall protein necessary for cell wall integrity. Plays only a minor role in hyphal morphogenesis and is not critical to biofilm formation. This chain is Cell wall protein PGA62 (PGA62), found in Candida albicans (strain SC5314 / ATCC MYA-2876) (Yeast).